A 250-amino-acid polypeptide reads, in one-letter code: NAD(P)H-quinone oxidoreductase subunit K, chloroplastic (250 aa).

The [4Fe-4S] cluster site is built by C67, C68, C132, and C163.

Belongs to the complex I 20 kDa subunit family. In terms of assembly, NDH is composed of at least 16 different subunits, 5 of which are encoded in the nucleus. [4Fe-4S] cluster is required as a cofactor.

It localises to the plastid. It is found in the chloroplast thylakoid membrane. The catalysed reaction is a plastoquinone + NADH + (n+1) H(+)(in) = a plastoquinol + NAD(+) + n H(+)(out). The enzyme catalyses a plastoquinone + NADPH + (n+1) H(+)(in) = a plastoquinol + NADP(+) + n H(+)(out). NDH shuttles electrons from NAD(P)H:plastoquinone, via FMN and iron-sulfur (Fe-S) centers, to quinones in the photosynthetic chain and possibly in a chloroplast respiratory chain. The immediate electron acceptor for the enzyme in this species is believed to be plastoquinone. Couples the redox reaction to proton translocation, and thus conserves the redox energy in a proton gradient. The sequence is that of NAD(P)H-quinone oxidoreductase subunit K, chloroplastic from Adiantum capillus-veneris (Maidenhair fern).